A 141-amino-acid chain; its full sequence is MLNEFKAFIAKGNVMDLAVGVIIGGAFGGIVKSLVDDIIMPIVGAIFGGFDFSNYFLGLSSAVNAPTLAGARAQGAVLAYGSFITVLINFLILAWIIFLMVKGVNTLRAQVERKDNKVAEAAPPPADVQLLTEIRDLLAKR.

Helical transmembrane passes span 14 to 34 (VMDLAVGVIIGGAFGGIVKSL), 38 to 58 (IIMPIVGAIFGGFDFSNYFLG), and 81 to 101 (GSFITVLINFLILAWIIFLMV).

This sequence belongs to the MscL family. As to quaternary structure, homopentamer.

The protein resides in the cell inner membrane. Functionally, channel that opens in response to stretch forces in the membrane lipid bilayer. May participate in the regulation of osmotic pressure changes within the cell. The sequence is that of Large-conductance mechanosensitive channel from Rhizobium rhizogenes (strain K84 / ATCC BAA-868) (Agrobacterium radiobacter).